Consider the following 432-residue polypeptide: Major royal jelly protein 1 (432 aa).

The first 19 residues, M1–G19, serve as a signal peptide directing secretion. 3 N-linked (GlcNAc...) asparagine glycosylation sites follow: N28, N144, and N177. Disulfide bonds link C118/C150, C132/C195, and C329/C416. P364 is a 24-methylenecholesterol binding site. The residue at position 431 (H431) is a Histidine amide; atypical. L432 is modified (leucine amide; atypical).

It belongs to the major royal jelly protein family. Is present in royal jelly in different forms: monomer (55 kDa), oligomeric subunit (ca. 287-420 kDa), and water-insoluble aggregates in sediment after interaction with fatty acids. Component of the apisin heterooligomer complex consisting of 4 copies of MRJP1 and 4 copies of apisimin, associated with 8 molecules of 24-methylenecholesterol; apisimin forms a bridge connecting two MRJP1 dimers. At low pH multiple apisin octamers stack to form filaments that increase the viscosity of royal jelly; these filaments may be stabilized by bound fatty acid chains. The mandibular gland, where royal jelly is produced, has low pH conditions favouring filament formation, while the higher pH of the insect midgut favors filament disassembly. Post-translationally, N-glycosylated on Asn-28, Asn-144 and Asn-177. Glycosylation is required to prevent apisin multimers from aggregating. In terms of processing, jellein-2 is probably processed to yield jellein-1 and jellein-4. In terms of tissue distribution, found in and secreted from the hypopharyngeal glands of the worker honey bee (at protein level); expression peaks at 12 days post eclosion. Expressed in the brains of worker bees (at protein level); found in antennal lobe, optical lobe and a subpopulation of Kenyon cells in the mushroom body. Found in the ommatidia of worker bees (at protein level). Expressed in the spermatheca of adult queen bees (at protein level); expression levels are higher in mated queens than in virgin queens. Expressed in queen bee ovaries and male drone testes.

The protein localises to the secreted. It localises to the cytoplasm. It is found in the cell projection. The protein resides in the rhabdomere. Its subcellular location is the cytoskeleton. Its function is as follows. Most abundant protein component of royal jelly, a substance produced in the hypopharyngeal gland containing proteins, free amino acids, fatty acids, sugars and other nutrients, which is fed to developing larvae by worker nurse bees. Major royal jelly proteins (Mrjps) are high in essential amino acids and probably have a nutritional function in larval food. All larvae are fed some royal jelly (also known as worker jelly) early in their development but it forms the principal source of nutrition for larvae destined to become queen bees. Induces the differentiation of honey bee larvae into queens through an Egfr-mediated signaling pathway. Promotes body size increase by activating p70 S6 kinase, stimulates ovary development by augmenting the titer of vitellogenin (Vg) and juvenile hormone, and reduces developmental time by increasing the activity of mitogen-activated protein kinase and inducing 20-hydroxyecdysone (ecdysterone, 20E) production. Together with apisimin forms the apisin complex that polymerizes at low pH, forming a fiber network and increasing the viscosity of royal jelly. The viscous royal Jelly placed in honeycomb cells containing larvae destined to become queens acts as both a food supply and an adhesive preventing larvae from falling out; queens are reared in special large cells oriented vertically. Produced in the spermatheca of adult queen bees, along with other major royal jelly proteins, where it may act as a nutrient supply for sperm stored by mated queens, or be involved in energy metabolism. Functionally, has antibacterial activity against the Gram-positive bacteria S.aureus ATCC 6535, S.saprophyticus and B.subtilis CCT2471, and the Gram-negative bacteria E.coli CCT1371, E.cloacae ATCC 23355, K.pneumoniae ATCC 13883 and P.aeruginosa ATCC 27853, and antifungal activity against C.albicans. Lack cytolytic activity and does not induce rat peritoneal mast cell degranulation. Lacks antibacterial and antifungal activity. Lacks cytolytic activity and does not induce rat peritoneal mast cell degranulation. The polypeptide is Major royal jelly protein 1 (Apis mellifera (Honeybee)).